The sequence spans 195 residues: Interferon omega-2 (195 aa).

The signal sequence occupies residues 1 to 23 (MALLPSLLTALVVYELWPCGALG). 2 disulfide bridges follow: cysteine 24–cysteine 122 and cysteine 52–cysteine 162. An N-linked (GlcNAc...) asparagine glycan is attached at asparagine 101.

This sequence belongs to the alpha/beta interferon family.

It is found in the secreted. The sequence is that of Interferon omega-2 from Equus caballus (Horse).